The primary structure comprises 536 residues: GMP synthase [glutamine-hydrolyzing] (536 aa).

A Glutamine amidotransferase type-1 domain is found at 19-212; that stretch reads RILILDFGSQ…VHEICDCAGS (194 aa). Residue C96 is the Nucleophile of the active site. Residues H186 and E188 contribute to the active site. A GMPS ATP-PPase domain is found at 213–411; it reads WTPDNIIDMR…LGLPAKMINR (199 aa). 240–246 is an ATP binding site; sequence SGGVDSS.

In terms of assembly, homodimer.

The catalysed reaction is XMP + L-glutamine + ATP + H2O = GMP + L-glutamate + AMP + diphosphate + 2 H(+). Its pathway is purine metabolism; GMP biosynthesis; GMP from XMP (L-Gln route): step 1/1. Its function is as follows. Catalyzes the synthesis of GMP from XMP. The polypeptide is GMP synthase [glutamine-hydrolyzing] (Psychrobacter arcticus (strain DSM 17307 / VKM B-2377 / 273-4)).